Here is a 155-residue protein sequence, read N- to C-terminus: Large ribosomal subunit protein eL19 (155 aa).

The segment covering 66-84 (VRHLQRRKGRRRGMGRRKG) has biased composition (basic residues). The disordered stretch occupies residues 66 to 85 (VRHLQRRKGRRRGMGRRKGV).

The protein belongs to the eukaryotic ribosomal protein eL19 family. In terms of assembly, part of the 50S ribosomal subunit.

Binds to the 23S rRNA. The protein is Large ribosomal subunit protein eL19 of Aeropyrum pernix (strain ATCC 700893 / DSM 11879 / JCM 9820 / NBRC 100138 / K1).